A 125-amino-acid chain; its full sequence is AENNLKLPKLAEKDKCFQSQFNQETCMTRITTGLQEFQIHLKYLEANYEGNKNNAHSVYISTKHLLQKLRPMNQVEVTTPNPTTDSSLQALFKSQDKWLKHVTIHLILRSLEDFLQFSLRAIRIM.

Residues Cys16 and Cys26 are joined by a disulfide bond.

This sequence belongs to the IL-6 superfamily. As to quaternary structure, component of a hexamer of two molecules each of IL6, IL6R and IL6ST; first binds to IL6R to associate with the signaling subunit IL6ST. Interacts with IL6R (via the N-terminal ectodomain); this interaction may be affected by IL6R-binding with SORL1, hence decreasing IL6 cis signaling. Interacts with SORL1 (via the N-terminal ectodomain); this interaction leads to IL6 internalization and lysosomal degradation. May form a trimeric complex with the soluble SORL1 ectodomain and soluble IL6R receptor; this interaction might stabilize circulating IL6, hence promoting IL6 trans signaling.

The protein localises to the secreted. Cytokine with a wide variety of biological functions in immunity, tissue regeneration, and metabolism. Binds to IL6R, then the complex associates to the signaling subunit IL6ST/gp130 to trigger the intracellular IL6-signaling pathway. The interaction with the membrane-bound IL6R and IL6ST stimulates 'classic signaling', whereas the binding of IL6 and soluble IL6R to IL6ST stimulates 'trans-signaling'. Alternatively, 'cluster signaling' occurs when membrane-bound IL6:IL6R complexes on transmitter cells activate IL6ST receptors on neighboring receiver cells. In terms of biological role, IL6 is a potent inducer of the acute phase response. Rapid production of IL6 contributes to host defense during infection and tissue injury, but excessive IL6 synthesis is involved in disease pathology. In the innate immune response, is synthesized by myeloid cells, such as macrophages and dendritic cells, upon recognition of pathogens through toll-like receptors (TLRs) at the site of infection or tissue injury. In the adaptive immune response, is required for the differentiation of B cells into immunoglobulin-secreting cells. Plays a major role in the differentiation of CD4(+) T cell subsets. Essential factor for the development of T follicular helper (Tfh) cells that are required for the induction of germinal-center formation. Required to drive naive CD4(+) T cells to the Th17 lineage. Also required for proliferation of myeloma cells and the survival of plasmablast cells. Functionally, acts as an essential factor in bone homeostasis and on vessels directly or indirectly by induction of VEGF, resulting in increased angiogenesis activity and vascular permeability. Induces, through 'trans-signaling' and synergistically with IL1B and TNF, the production of VEGF. Involved in metabolic controls, is discharged into the bloodstream after muscle contraction increasing lipolysis and improving insulin resistance. 'Trans-signaling' in central nervous system also regulates energy and glucose homeostasis. Mediates, through GLP-1, crosstalk between insulin-sensitive tissues, intestinal L cells and pancreatic islets to adapt to changes in insulin demand. Also acts as a myokine. Plays a protective role during liver injury, being required for maintenance of tissue regeneration. Also has a pivotal role in iron metabolism by regulating HAMP/hepcidin expression upon inflammation or bacterial infection. Through activation of IL6ST-YAP-NOTCH pathway, induces inflammation-induced epithelial regeneration. The chain is Interleukin-6 (IL6) from Neovison vison (American mink).